A 992-amino-acid chain; its full sequence is UPF0182 protein Mb3215c (992 aa).

7 helical membrane passes run 17–39 (RILI…LIDA), 59–81 (LATR…FGGL), 113–135 (LVGI…SYWA), 169–191 (LMLS…AHYI), 212–229 (LVSL…AYWL), 255–277 (VLPA…FSAI), and 284–306 (IPAI…WPLI). The disordered stretch occupies residues 906 to 938 (PTEAAVPPSPAANPPPPASGPQPPPVTAAPPVP). Residues 912–938 (PPSPAANPPPPASGPQPPPVTAAPPVP) show a composition bias toward pro residues.

It belongs to the UPF0182 family.

The protein resides in the cell membrane. This is UPF0182 protein Mb3215c from Mycobacterium bovis (strain ATCC BAA-935 / AF2122/97).